The chain runs to 86 residues: Neuropeptide precursor capa-1 (86 aa).

The first 19 residues, 1–19, serve as a signal peptide directing secretion; it reads MLLWIVATLLIFSLPVSTA.

As to expression, expressed in two pairs of neurons in the anterior part of the nervous system (at protein level).

Its function is as follows. Encodes at least three neuropeptides: two of the periviscerokinin family (APHPSSALLVPYPRV-amide and LYMARV-amide) and one pyrokinin (AFFYTPRI-amide). Putative ligand for neuromedin U receptor homolog nmur-2. The chain is Neuropeptide precursor capa-1 from Caenorhabditis elegans.